The sequence spans 258 residues: Thiazole synthase (258 aa).

Catalysis depends on K98, which acts as the Schiff-base intermediate with DXP. Residues G159, 185–186, and 207–208 each bind 1-deoxy-D-xylulose 5-phosphate; these read AG and NT.

The protein belongs to the ThiG family. In terms of assembly, homotetramer. Forms heterodimers with either ThiH or ThiS.

It localises to the cytoplasm. It catalyses the reaction [ThiS sulfur-carrier protein]-C-terminal-Gly-aminoethanethioate + 2-iminoacetate + 1-deoxy-D-xylulose 5-phosphate = [ThiS sulfur-carrier protein]-C-terminal Gly-Gly + 2-[(2R,5Z)-2-carboxy-4-methylthiazol-5(2H)-ylidene]ethyl phosphate + 2 H2O + H(+). Its pathway is cofactor biosynthesis; thiamine diphosphate biosynthesis. In terms of biological role, catalyzes the rearrangement of 1-deoxy-D-xylulose 5-phosphate (DXP) to produce the thiazole phosphate moiety of thiamine. Sulfur is provided by the thiocarboxylate moiety of the carrier protein ThiS. In vitro, sulfur can be provided by H(2)S. This Bacillus cereus (strain ZK / E33L) protein is Thiazole synthase.